The sequence spans 681 residues: PTS system glucose-specific EIICBA component (681 aa).

Residues 3–414 (KKLFGQLQRI…LKYKTPGRED (412 aa)) enclose the PTS EIIC type-1 domain. The next 10 helical transmembrane spans lie at 16–36 (LMLPVAILPAAGLLLAIGTAM), 73–93 (MIFALGVAIGLAGGDGVAAIA), 126–146 (ILGIPTLQTGVFGGIIIGALA), 170–190 (FVPIMMATTSFILAFPMALIW), 199–219 (AFSTGLLDSNTGVAVFLFGFI), 273–293 (FMQGEFPVMMFGLPAAALAIY), 303–323 (VVAGLMGSAALTSFLTGITEP), 328–348 (FLFVAPLLFFIHAVLDGLSFL), 355–375 (LHLGYTFSGGFIDYFLLGILP), and 383–403 (VIPVGLVYAVIYYFVFRFLIV). The region spanning 425–506 (TELPYAVLEA…QQIMNGQVVE (82 aa)) is the PTS EIIB type-1 domain. C447 serves as the catalytic Phosphocysteine intermediate; for EIIB activity. The 105-residue stretch at 551–655 (DQVFSEKMMG…SDITPIIVTQ (105 aa)) folds into the PTS EIIA type-1 domain. H603 (tele-phosphohistidine intermediate; for EIIA activity) is an active-site residue.

The protein localises to the cell membrane. The enzyme catalyses N(pros)-phospho-L-histidyl-[protein] + D-glucose(out) = D-glucose 6-phosphate(in) + L-histidyl-[protein]. Functionally, the phosphoenolpyruvate-dependent sugar phosphotransferase system (sugar PTS), a major carbohydrate active transport system, catalyzes the phosphorylation of incoming sugar substrates concomitantly with their translocation across the cell membrane. This system is involved in glucose transport. The sequence is that of PTS system glucose-specific EIICBA component (ptsG) from Staphylococcus aureus (strain NCTC 8325 / PS 47).